The primary structure comprises 359 residues: Apelin receptor B (359 aa).

Residues M1 to L36 lie on the Extracellular side of the membrane. N6 and N21 each carry an N-linked (GlcNAc...) asparagine glycan. Intrachain disulfides connect C25-C288 and C107-C186. A helical membrane pass occupies residues I37–F57. The Cytoplasmic portion of the chain corresponds to T58 to N75. A helical membrane pass occupies residues L76–L96. The Extracellular segment spans residues G97 to K108. Residues I109–S129 traverse the membrane as a helical segment. Residues L130–M151 are Cytoplasmic-facing. A helical membrane pass occupies residues R152–F172. The Extracellular segment spans residues R173–A213. N182 carries N-linked (GlcNAc...) asparagine glycosylation. The chain crosses the membrane as a helical span at residues L214 to V234. Over T235–L251 the chain is Cytoplasmic. A helical transmembrane segment spans residues L252–V272. The Extracellular portion of the chain corresponds to K273–D286. A helical transmembrane segment spans residues S287 to V307. Over N308 to V359 the chain is Cytoplasmic.

This sequence belongs to the G-protein coupled receptor 1 family. As to expression, mesendodermal expression at the blastoderm margin appears by 4.5 hpf. At early gastrulation, expression is maintained ventrolaterally while expression in dorsal cells and random deep cells declines. During gastrulation and segmentation, expression is maintained in adaxial, intermediate, and lateral plate mesoderm. During late segmentation, expressed in several regions including the forming heart. By 24 hpf, expressed in the dorsal aorta, caudal vein, and intersomitic blood vessels.

Its subcellular location is the cell membrane. G protein-coupled receptor for peptide hormones apelin (apln) and apelin receptor early endogenous ligand (apela), that plays a role in the regulation of normal cardiovascular function and fluid homeostasis. When acting as apelin receptor, activates both G(i) protein pathway that inhibits adenylate cyclase activity, and the beta-arrestin pathway that promotes internalization of the receptor. Also functions as mechanoreceptor that is activated by pathological stimuli in a G-protein-independent fashion to induce beta-arrestin signaling, hence eliciting cardiac hypertrophy. However, the presence of apelin ligand blunts cardiac hypertrophic induction from APLNR/APJ on response to pathological stimuli. Plays a key role in early development such as gastrulation, blood vessels formation and heart morphogenesis by acting as a receptor for apela hormone, promoting endoderm and mesendoderm cell migration and regulating the migration of cells fated to become myocardial progenitors, respectively. Positively regulates angioblast migration toward the embryonic midline, i.e. the position of the future vessel formation, during vasculogenesis. May promote sinus venosus (SV)-derived endothelial cells migration into the developing heart to promote coronary blood vessel development. Required for cardiovascular development, particularly for intersomitic vein angiogenesis by acting as a receptor for apln hormone. Plays a role in various processes in adults such as regulation of blood vessel formation, blood pressure, heart contractility and heart failure. Acts redundantly with agtrl1a in heart development. Its function is as follows. G protein-coupled receptor for peptide hormones apelin (APLN) and apelin receptor early endogenous ligand (APELA/ELA), that plays a role in the regulation of normal cardiovascular function and fluid homeostasis. When acting as apelin receptor, activates both G(i) protein pathway that inhibits adenylate cyclase activity, and the beta-arrestin pathway that promotes internalization of the receptor. APLNR/APJ also functions as mechanoreceptor that is activated by pathological stimuli in a G-protein-independent fashion to induce beta-arrestin signaling, hence eliciting cardiac hypertrophy. Plays a key role in early development such as gastrulation, blood vessels formation and heart morphogenesis by acting as a APELA receptor. May promote angioblast migration toward the embryonic midline, i.e. the position of the future vessel formation, during vasculogenesis. Promotes sinus venosus (SV)-derived endothelial cells migration into the developing heart to promote coronary blood vessel development. Also plays a role in various processes in adults such as regulation of blood vessel formation, blood pressure, heart contractility and heart failure. In Danio rerio (Zebrafish), this protein is Apelin receptor B (aplnrb).